A 153-amino-acid chain; its full sequence is Hemoglobin-3 (153 aa).

An N-acetylserine modification is found at serine 2. Positions glycine 4–lysine 150 constitute a Globin domain. Histidine 99 serves as a coordination point for heme b.

It belongs to the globin family. As to quaternary structure, homotetramer.

The protein resides in the cytoplasm. In Phacoides pectinatus (Thick lucine), this protein is Hemoglobin-3.